The primary structure comprises 150 residues: Deoxyuridine 5'-triphosphate nucleotidohydrolase (150 aa).

Substrate is bound by residues 69 to 71 (RSG), Asn-82, 86 to 88 (LID), and Met-96.

Belongs to the dUTPase family. Mg(2+) serves as cofactor.

The catalysed reaction is dUTP + H2O = dUMP + diphosphate + H(+). The protein operates within pyrimidine metabolism; dUMP biosynthesis; dUMP from dCTP (dUTP route): step 2/2. This enzyme is involved in nucleotide metabolism: it produces dUMP, the immediate precursor of thymidine nucleotides and it decreases the intracellular concentration of dUTP so that uracil cannot be incorporated into DNA. In Alcanivorax borkumensis (strain ATCC 700651 / DSM 11573 / NCIMB 13689 / SK2), this protein is Deoxyuridine 5'-triphosphate nucleotidohydrolase.